Reading from the N-terminus, the 150-residue chain is UPF0208 membrane protein VS_0999 (150 aa).

The next 2 membrane-spanning stretches (helical) occupy residues phenylalanine 42–asparagine 62 and alanine 70–asparagine 90.

This sequence belongs to the UPF0208 family.

It is found in the cell inner membrane. This chain is UPF0208 membrane protein VS_0999, found in Vibrio atlanticus (strain LGP32) (Vibrio splendidus (strain Mel32)).